The primary structure comprises 576 residues: Arginine--tRNA ligase (576 aa).

Positions 122-132 (PNVAKEMHVGH) match the 'HIGH' region motif.

It belongs to the class-I aminoacyl-tRNA synthetase family. Monomer.

Its subcellular location is the cytoplasm. The enzyme catalyses tRNA(Arg) + L-arginine + ATP = L-arginyl-tRNA(Arg) + AMP + diphosphate. In Pectobacterium carotovorum subsp. carotovorum (strain PC1), this protein is Arginine--tRNA ligase.